Consider the following 490-residue polypeptide: Auxin transporter-like protein 5 (490 aa).

At 1–55 (MEMANDKVAETVIVGNYVEMESEGKPPQDIKSKLSNFLWHGGSAYDAWFSCASNQ) the chain is on the cytoplasmic side. A helical transmembrane segment spans residues 56 to 73 (VAQVLLTLPYSFSQLGML). The Extracellular portion of the chain corresponds to 74-75 (SG). A helical membrane pass occupies residues 76–96 (ILFQLFYGILGSWTAYLISIL). Residues 97 to 132 (YVEYRTRKEREKVNFRSHVIQWFEVLDGLLGKHWRN) are Cytoplasmic-facing. Residues 133–153 (VGLGFNCTFLLFGSVIQLIAC) traverse the membrane as a helical segment. Residues 154 to 168 (ASNIYYINDNLDKRT) are Extracellular-facing. A helical transmembrane segment spans residues 169–189 (WTYIFGACCATTVFIPSFHNY). Residue arginine 190 is a topological domain, cytoplasmic. A helical transmembrane segment spans residues 191–211 (IWSFLGLVMTTYTAWYLTIAA). Residues 212 to 227 (VLHGQVEGVKHSGPNK) lie on the Extracellular side of the membrane. A helical membrane pass occupies residues 228–248 (IILYFTGATNILYTFGGHAVT). At 249–262 (VEIMHAMWKPQKFK) the chain is on the cytoplasmic side. A helical transmembrane segment spans residues 263 to 283 (AIYLLATLYVLTLTIPSATAV). The Extracellular segment spans residues 284–310 (YWAFGDMLLNHSNAFALLPKSPFRDMA). The N-linked (GlcNAc...) asparagine glycan is linked to asparagine 293. A helical transmembrane segment spans residues 311-331 (VILMLIHQFITFGFACTPLYF). Residues 332–352 (VWEKTVGMHECKSLCKRALVR) are Cytoplasmic-facing. Residues 353-373 (LPVVIPIWFLAIIFPFFGPIN) form a helical membrane-spanning segment. Residues 374–376 (STV) lie on the Extracellular side of the membrane. A helical transmembrane segment spans residues 377-397 (GSLLVSFTVYIIPALAHIFTF). The Cytoplasmic segment spans residues 398 to 420 (KSSSARQNAVEQPPKFVGRWVGT). The helical transmembrane segment at 421–441 (FVINVFIVVWVLIVGFGFGGW) threads the bilayer. The Extracellular portion of the chain corresponds to 442–490 (ASMVNFVHQIDTFGLFTKCYQCPPPTPSVPTMPPHQMNATAPSPHHHHH). Asparagine 479 is a glycosylation site (N-linked (GlcNAc...) asparagine).

This sequence belongs to the amino acid/polyamine transporter 2 family. Amino acid/auxin permease (AAAP) (TC 2.A.18.1) subfamily. In terms of tissue distribution, shoots and roots of nodulating plants, at low levels.

Its subcellular location is the cell membrane. In terms of biological role, carrier protein involved in proton-driven auxin influx. Mediates the formation of auxin gradient from developing leaves (site of auxin biosynthesis) to tips by contributing to the loading of auxin in vascular tissues and facilitating acropetal (base to tip) auxin transport within inner tissues of the root apex, and basipetal (tip to base) auxin transport within outer tissues of the root apex. May be involved in lateral roots and nodules formation. This Medicago truncatula (Barrel medic) protein is Auxin transporter-like protein 5 (LAX5).